A 126-amino-acid polypeptide reads, in one-letter code: Small ribosomal subunit protein uS11 (126 aa).

It belongs to the universal ribosomal protein uS11 family. Part of the 30S ribosomal subunit.

Its function is as follows. Located on the platform of the 30S subunit. The polypeptide is Small ribosomal subunit protein uS11 (Methanosarcina barkeri (strain Fusaro / DSM 804)).